Reading from the N-terminus, the 258-residue chain is Large ribosomal subunit protein uL5c (258 aa).

Residues 1 to 38 constitute a chloroplast transit peptide; that stretch reads MASTSLLQSTSSSFAGVRFHCRTSAAPRVGLSSFTVKA.

Component of the chloroplast large ribosomal subunit (LSU). Mature 70S chloroplast ribosomes of higher plants consist of a small (30S) and a large (50S) subunit. The 30S small subunit contains 1 molecule of ribosomal RNA (16S rRNA) and 24 different proteins. The 50S large subunit contains 3 rRNA molecules (23S, 5S and 4.5S rRNA) and 33 different proteins.

The protein localises to the plastid. It localises to the chloroplast. Component of the chloroplast ribosome (chloro-ribosome), a dedicated translation machinery responsible for the synthesis of chloroplast genome-encoded proteins, including proteins of the transcription and translation machinery and components of the photosynthetic apparatus. The chain is Large ribosomal subunit protein uL5c (RPL5) from Spinacia oleracea (Spinach).